A 432-amino-acid chain; its full sequence is Adenylosuccinate synthetase (432 aa).

Residues 13–19 and 41–43 contribute to the GTP site; these read GDEGKGK and GHT. D14 functions as the Proton acceptor in the catalytic mechanism. 2 residues coordinate Mg(2+): D14 and G41. Residues 14–17, 39–42, T130, R144, Q225, T240, and R304 contribute to the IMP site; these read DEGK and NAGH. H42 acts as the Proton donor in catalysis. Substrate is bound at residue 300–306; it reads ATTGRPR. GTP contacts are provided by residues R306, 332-334, and 415-417; these read KLD and STG.

It belongs to the adenylosuccinate synthetase family. Homodimer. It depends on Mg(2+) as a cofactor.

It localises to the cytoplasm. It catalyses the reaction IMP + L-aspartate + GTP = N(6)-(1,2-dicarboxyethyl)-AMP + GDP + phosphate + 2 H(+). It functions in the pathway purine metabolism; AMP biosynthesis via de novo pathway; AMP from IMP: step 1/2. In terms of biological role, plays an important role in the de novo pathway of purine nucleotide biosynthesis. Catalyzes the first committed step in the biosynthesis of AMP from IMP. The polypeptide is Adenylosuccinate synthetase (Hahella chejuensis (strain KCTC 2396)).